The sequence spans 214 residues: ER lumen protein-retaining receptor 3 (214 aa).

Residues 1 to 4 (MNVF) lie on the Lumenal side of the membrane. Residues 5–24 (RILGDLSHLLAMILLLVKIW) form a helical membrane-spanning segment. Topologically, residues 25–32 (RSKSCAGI) are cytoplasmic. Residues 33–52 (SGKSQILFALVFTTRYLDLF) form a helical membrane-spanning segment. The interval 47–48 (RY) is interaction with the K-D-E-L motif on target proteins. Topologically, residues 53-58 (SNFISI) are lumenal. The helical transmembrane segment at 59 to 79 (YNTVMKVVFLLCAYVTVYMIY) threads the bilayer. Residues 80–92 (WKFRKTFDIENDT) lie on the Cytoplasmic side of the membrane. Residues 93–110 (FRLEFLLVPVTGLSFLVN) form a helical membrane-spanning segment. The Lumenal portion of the chain corresponds to 111–116 (YSYTPM). Residues 117 to 135 (EVLWTFSIYLESVAILPQL) form a helical membrane-spanning segment. Topologically, residues 136–149 (FMISKTGEAETITT) are cytoplasmic. The chain crosses the membrane as a helical span at residues 150–168 (HYLFFLGLYRLLYLANWIR). The segment at 159–169 (RLLYLANWIRR) is interaction with the K-D-E-L motif on target proteins. Residues 169 to 178 (RYQTENFYDQ) are Lumenal-facing. Residues 179 to 199 (ISVVSGVVQTIFYCDFFYLYV) traverse the membrane as a helical segment. Residues 200–214 (TKVLKGKKLSLPVPV) lie on the Cytoplasmic side of the membrane. Positions 204–207 (KGKK) are important for recycling of cargo proteins with the sequence motif K-D-E-L from the Golgi to the endoplasmic reticulum.

Belongs to the ERD2 family.

The protein resides in the endoplasmic reticulum membrane. Its subcellular location is the golgi apparatus membrane. It localises to the cytoplasmic vesicle. It is found in the COPI-coated vesicle membrane. Functionally, receptor for the C-terminal sequence motif K-D-E-L that is present on endoplasmic reticulum resident proteins and that mediates their recycling from the Golgi back to the endoplasmic reticulum. The sequence is that of ER lumen protein-retaining receptor 3 (Kdelr3) from Mus musculus (Mouse).